A 431-amino-acid polypeptide reads, in one-letter code: GTPase Obg (431 aa).

Positions 1–158 constitute an Obg domain; sequence MFVDQVKINV…REIRLELKVL (158 aa). The interval 125–145 is disordered; that stretch reads GNIHFASPKNPAPEIAENGEP. Residues 159–335 enclose the OBG-type G domain; it reads ADVGLVGFPS…LLQRTADMLA (177 aa). GTP is bound by residues 165–172, 190–194, 212–215, 282–285, and 316–318; these read GFPSVGKS, FTTLV, DLPG, NKMD, and SAL. Residues S172 and T192 each contribute to the Mg(2+) site. One can recognise an OCT domain in the interval 353–431; that stretch reads YNFQPEAEFT…IDDFTFEYMA (79 aa).

Belongs to the TRAFAC class OBG-HflX-like GTPase superfamily. OBG GTPase family. In terms of assembly, monomer. It depends on Mg(2+) as a cofactor.

The protein localises to the cytoplasm. In terms of biological role, an essential GTPase which binds GTP, GDP and possibly (p)ppGpp with moderate affinity, with high nucleotide exchange rates and a fairly low GTP hydrolysis rate. Plays a role in control of the cell cycle, stress response, ribosome biogenesis and in those bacteria that undergo differentiation, in morphogenesis control. The polypeptide is GTPase Obg (Levilactobacillus brevis (strain ATCC 367 / BCRC 12310 / CIP 105137 / JCM 1170 / LMG 11437 / NCIMB 947 / NCTC 947) (Lactobacillus brevis)).